The chain runs to 133 residues: Transcription antitermination protein NusB (133 aa).

The protein belongs to the NusB family.

In terms of biological role, involved in transcription antitermination. Required for transcription of ribosomal RNA (rRNA) genes. Binds specifically to the boxA antiterminator sequence of the ribosomal RNA (rrn) operons. This Clostridium botulinum (strain Alaska E43 / Type E3) protein is Transcription antitermination protein NusB.